The following is a 343-amino-acid chain: S-adenosylmethionine:tRNA ribosyltransferase-isomerase (343 aa).

The protein belongs to the QueA family. Monomer.

It is found in the cytoplasm. The catalysed reaction is 7-aminomethyl-7-carbaguanosine(34) in tRNA + S-adenosyl-L-methionine = epoxyqueuosine(34) in tRNA + adenine + L-methionine + 2 H(+). It participates in tRNA modification; tRNA-queuosine biosynthesis. Functionally, transfers and isomerizes the ribose moiety from AdoMet to the 7-aminomethyl group of 7-deazaguanine (preQ1-tRNA) to give epoxyqueuosine (oQ-tRNA). The chain is S-adenosylmethionine:tRNA ribosyltransferase-isomerase from Geobacter metallireducens (strain ATCC 53774 / DSM 7210 / GS-15).